Here is a 489-residue protein sequence, read N- to C-terminus: Ribulose bisphosphate carboxylase large chain 2 (489 aa).

Substrate contacts are provided by asparagine 128 and threonine 178. Catalysis depends on lysine 180, which acts as the Proton acceptor. Residue lysine 182 participates in substrate binding. Residues lysine 206, aspartate 208, and glutamate 209 each contribute to the Mg(2+) site. N6-carboxylysine is present on lysine 206. Histidine 298 serves as the catalytic Proton acceptor. Residues arginine 299, histidine 331, and serine 383 each coordinate substrate.

The protein belongs to the RuBisCO large chain family. Type I subfamily. In terms of assembly, heterohexadecamer of 8 large chains and 8 small chains. The cofactor is Mg(2+).

It catalyses the reaction 2 (2R)-3-phosphoglycerate + 2 H(+) = D-ribulose 1,5-bisphosphate + CO2 + H2O. The catalysed reaction is D-ribulose 1,5-bisphosphate + O2 = 2-phosphoglycolate + (2R)-3-phosphoglycerate + 2 H(+). Functionally, ruBisCO catalyzes two reactions: the carboxylation of D-ribulose 1,5-bisphosphate, the primary event in carbon dioxide fixation, as well as the oxidative fragmentation of the pentose substrate. Both reactions occur simultaneously and in competition at the same active site. The protein is Ribulose bisphosphate carboxylase large chain 2 of Nitrobacter winogradskyi (strain ATCC 25391 / DSM 10237 / CIP 104748 / NCIMB 11846 / Nb-255).